Reading from the N-terminus, the 155-residue chain is Large ribosomal subunit protein uL22c (155 aa).

It belongs to the universal ribosomal protein uL22 family. In terms of assembly, part of the 50S ribosomal subunit.

The protein localises to the plastid. It localises to the chloroplast. In terms of biological role, this protein binds specifically to 23S rRNA. The globular domain of the protein is located near the polypeptide exit tunnel on the outside of the subunit, while an extended beta-hairpin is found that lines the wall of the exit tunnel in the center of the 70S ribosome. This is Large ribosomal subunit protein uL22c (rpl22) from Atropa belladonna (Belladonna).